The chain runs to 212 residues: FMN-dependent NADH:quinone oxidoreductase (212 aa).

FMN is bound by residues S9, 15-17 (SVS), and 138-141 (TRGG).

It belongs to the azoreductase type 1 family. In terms of assembly, homodimer. FMN is required as a cofactor.

The catalysed reaction is 2 a quinone + NADH + H(+) = 2 a 1,4-benzosemiquinone + NAD(+). It carries out the reaction N,N-dimethyl-1,4-phenylenediamine + anthranilate + 2 NAD(+) = 2-(4-dimethylaminophenyl)diazenylbenzoate + 2 NADH + 2 H(+). In terms of biological role, quinone reductase that provides resistance to thiol-specific stress caused by electrophilic quinones. Functionally, also exhibits azoreductase activity. Catalyzes the reductive cleavage of the azo bond in aromatic azo compounds to the corresponding amines. This is FMN-dependent NADH:quinone oxidoreductase from Delftia acidovorans (strain DSM 14801 / SPH-1).